Reading from the N-terminus, the 567-residue chain is Serine/threonine-protein kinase SSN3 (567 aa).

The 403-residue stretch at 68–470 (YEIIGYIAAG…AINALDHSYF (403 aa)) folds into the Protein kinase domain. 74 to 82 (IAAGTYGKV) is an ATP binding site. A disordered region spans residues 88 to 179 (RQSSKSSSST…RNSENTDNRR (92 aa)). Low complexity predominate over residues 90-101 (SSKSSSSTGSDS). Composition is skewed to polar residues over residues 102–122 (LAQDTKPTTEFSNTSSLQNAG) and 133–150 (PNSNNISAGGNTNPELST). Residues 167-179 (GDKRNSENTDNRR) show a composition bias toward basic and acidic residues. Lysine 190 is a binding site for ATP. Aspartate 293 serves as the catalytic Proton acceptor. The span at 546–556 (AVSGNSSSQSS) shows a compositional bias: low complexity. A disordered region spans residues 546-567 (AVSGNSSSQSSRNMEPMKKKRK).

This sequence belongs to the protein kinase superfamily. CMGC Ser/Thr protein kinase family. CDC2/CDKX subfamily. In terms of assembly, component of the SRB8-11 complex, a regulatory module of the Mediator complex. The cofactor is Mg(2+).

The protein resides in the nucleus. It catalyses the reaction L-seryl-[protein] + ATP = O-phospho-L-seryl-[protein] + ADP + H(+). The catalysed reaction is L-threonyl-[protein] + ATP = O-phospho-L-threonyl-[protein] + ADP + H(+). It carries out the reaction [DNA-directed RNA polymerase] + ATP = phospho-[DNA-directed RNA polymerase] + ADP + H(+). Its function is as follows. Component of the SRB8-11 complex. The SRB8-11 complex is a regulatory module of the Mediator complex which is itself involved in regulation of basal and activated RNA polymerase II-dependent transcription. The SRB8-11 complex may be involved in the transcriptional repression of a subset of genes regulated by Mediator. It may inhibit the association of the Mediator complex with RNA polymerase II to form the holoenzyme complex. The SRB8-11 complex phosphorylates the C-terminal domain (CTD) of the largest subunit of RNA polymerase II. This Candida glabrata (strain ATCC 2001 / BCRC 20586 / JCM 3761 / NBRC 0622 / NRRL Y-65 / CBS 138) (Yeast) protein is Serine/threonine-protein kinase SSN3 (SSN3).